A 542-amino-acid chain; its full sequence is Putative selenium-binding protein (542 aa).

The protein belongs to the selenium-binding protein family.

The polypeptide is Putative selenium-binding protein (Caenorhabditis elegans).